Consider the following 399-residue polypeptide: Acetylornithine aminotransferase (399 aa).

Pyridoxal 5'-phosphate contacts are provided by residues 99 to 100 (GA) and F132. Position 135 (R135) interacts with N(2)-acetyl-L-ornithine. Residue 217-220 (DEVQ) coordinates pyridoxal 5'-phosphate. K246 is modified (N6-(pyridoxal phosphate)lysine). T274 serves as a coordination point for N(2)-acetyl-L-ornithine. T275 provides a ligand contact to pyridoxal 5'-phosphate.

The protein belongs to the class-III pyridoxal-phosphate-dependent aminotransferase family. ArgD subfamily. As to quaternary structure, homodimer. The cofactor is pyridoxal 5'-phosphate.

Its subcellular location is the cytoplasm. It carries out the reaction N(2)-acetyl-L-ornithine + 2-oxoglutarate = N-acetyl-L-glutamate 5-semialdehyde + L-glutamate. It functions in the pathway amino-acid biosynthesis; L-arginine biosynthesis; N(2)-acetyl-L-ornithine from L-glutamate: step 4/4. This chain is Acetylornithine aminotransferase, found in Agrobacterium fabrum (strain C58 / ATCC 33970) (Agrobacterium tumefaciens (strain C58)).